We begin with the raw amino-acid sequence, 87 residues long: Large ribosomal subunit protein bL31B (87 aa).

The protein belongs to the bacterial ribosomal protein bL31 family. Type B subfamily. In terms of assembly, part of the 50S ribosomal subunit.

The polypeptide is Large ribosomal subunit protein bL31B (Staphylococcus carnosus (strain TM300)).